Reading from the N-terminus, the 264-residue chain is Undecaprenyl-diphosphatase (264 aa).

8 helical membrane passes run 1–21, 40–60, 81–101, 109–129, 140–160, 183–203, 211–231, and 239–259; these read MTVF…FLPI, GLTF…AFFW, MFWY…LLEE, TPLL…WADA, ISMA…IPGV, FSFL…LKDI, AFIT…SFLL, and FALF…LAAA.

Belongs to the UppP family.

The protein localises to the cell membrane. The catalysed reaction is di-trans,octa-cis-undecaprenyl diphosphate + H2O = di-trans,octa-cis-undecaprenyl phosphate + phosphate + H(+). Its function is as follows. Catalyzes the dephosphorylation of undecaprenyl diphosphate (UPP). Confers resistance to bacitracin. This chain is Undecaprenyl-diphosphatase, found in Pelotomaculum thermopropionicum (strain DSM 13744 / JCM 10971 / SI).